The primary structure comprises 280 residues: Eukaryotic translation initiation factor 3 subunit F-1 (280 aa).

The MPN domain maps to 8-138; it reads VRVHPVVLFQ…LRAYVCIQLG (131 aa).

This sequence belongs to the eIF-3 subunit F family. In terms of assembly, component of the eukaryotic translation initiation factor 3 (eIF-3) complex. The eIF-3 complex interacts with pix.

Its subcellular location is the cytoplasm. Functionally, component of the eukaryotic translation initiation factor 3 (eIF-3) complex, which is involved in protein synthesis of a specialized repertoire of mRNAs and, together with other initiation factors, stimulates binding of mRNA and methionyl-tRNAi to the 40S ribosome. The eIF-3 complex specifically targets and initiates translation of a subset of mRNAs involved in cell proliferation. This chain is Eukaryotic translation initiation factor 3 subunit F-1, found in Drosophila virilis (Fruit fly).